We begin with the raw amino-acid sequence, 334 residues long: Succinylglutamate desuccinylase (334 aa).

Residues His59, Glu62, and His151 each coordinate Zn(2+). Glu215 is an active-site residue.

This sequence belongs to the AspA/AstE family. Succinylglutamate desuccinylase subfamily. Zn(2+) is required as a cofactor.

The enzyme catalyses N-succinyl-L-glutamate + H2O = L-glutamate + succinate. It participates in amino-acid degradation; L-arginine degradation via AST pathway; L-glutamate and succinate from L-arginine: step 5/5. In terms of biological role, transforms N(2)-succinylglutamate into succinate and glutamate. This is Succinylglutamate desuccinylase from Pseudomonas fluorescens (strain SBW25).